A 377-amino-acid chain; its full sequence is Flap endonuclease 1 (377 aa).

Residues 1–105 (MGIKGLNAII…HELSKRTARR (105 aa)) form an N-domain region. Residue aspartate 34 coordinates Mg(2+). 2 residues coordinate DNA: arginine 47 and arginine 71. Aspartate 87 is a binding site for Mg(2+). A disordered region spans residues 99–119 (SKRTARREETEKKLQEATDQA). An I-domain region spans residues 120-251 (EKMKQERRLV…VTALKLIKEY (132 aa)). Residues glutamate 156, glutamate 158, aspartate 177, and aspartate 179 each contribute to the Mg(2+) site. Glutamate 156 provides a ligand contact to DNA. DNA-binding residues include glycine 229 and aspartate 231. Aspartate 231 contacts Mg(2+). The interval 338–346 (VQGRLDGFF) is interaction with PCNA.

Belongs to the XPG/RAD2 endonuclease family. FEN1 subfamily. Interacts with PCNA. Three molecules of FEN1 bind to one PCNA trimer with each molecule binding to one PCNA monomer. PCNA stimulates the nuclease activity without altering cleavage specificity. Mg(2+) serves as cofactor. Phosphorylated. Phosphorylation upon DNA damage induces relocalization to the nuclear plasma.

Its subcellular location is the nucleus. It localises to the nucleolus. The protein localises to the nucleoplasm. The protein resides in the mitochondrion. Its function is as follows. Structure-specific nuclease with 5'-flap endonuclease and 5'-3' exonuclease activities involved in DNA replication and repair. During DNA replication, cleaves the 5'-overhanging flap structure that is generated by displacement synthesis when DNA polymerase encounters the 5'-end of a downstream Okazaki fragment. It enters the flap from the 5'-end and then tracks to cleave the flap base, leaving a nick for ligation. Also involved in the long patch base excision repair (LP-BER) pathway, by cleaving within the apurinic/apyrimidinic (AP) site-terminated flap. Acts as a genome stabilization factor that prevents flaps from equilibrating into structures that lead to duplications and deletions. Also possesses 5'-3' exonuclease activity on nicked or gapped double-stranded DNA, and exhibits RNase H activity. Also involved in replication and repair of rDNA and in repairing mitochondrial DNA. This chain is Flap endonuclease 1, found in Vanderwaltozyma polyspora (strain ATCC 22028 / DSM 70294 / BCRC 21397 / CBS 2163 / NBRC 10782 / NRRL Y-8283 / UCD 57-17) (Kluyveromyces polysporus).